A 415-amino-acid chain; its full sequence is Heterogeneous nuclear ribonucleoprotein F (415 aa).

Methionine 1 is subject to N-acetylmethionine. The residue at position 2 (methionine 2) is an N-acetylmethionine; in Heterogeneous nuclear ribonucleoprotein F, N-terminally processed. One can recognise an RRM 1 domain in the interval 11 to 90 (YVVKLRGLPW…RYIEVFKSHR (80 aa)). A Glycyl lysine isopeptide (Lys-Gly) (interchain with G-Cter in SUMO) cross-link involves residue lysine 72. Residues 81–86 (RYIEVF) are interaction with RNA. Lysine 87 participates in a covalent cross-link: Glycyl lysine isopeptide (Lys-Gly) (interchain with G-Cter in SUMO2). Phosphoserine occurs at positions 104, 107, and 161. The 78-residue stretch at 111-188 (GFVRLRGLPF…RYIEVFKSSQ (78 aa)) folds into the RRM 2 domain. Lysine 167 participates in a covalent cross-link: Glycyl lysine isopeptide (Lys-Gly) (interchain with G-Cter in SUMO2). Residues 179 to 184 (RYIEVF) form an interaction with RNA region. A Glycyl lysine isopeptide (Lys-Gly) (interchain with G-Cter in SUMO2) cross-link involves residue lysine 185. Phosphoserine is present on residues serine 187, serine 193, and serine 195. Lysine 200 is subject to N6-acetyllysine; alternate. Residue lysine 200 forms a Glycyl lysine isopeptide (Lys-Gly) (interchain with G-Cter in SUMO2); alternate linkage. Phosphothreonine is present on threonine 215. Lysine 224 is modified (N6-acetyllysine; alternate). Lysine 224 is covalently cross-linked (Glycyl lysine isopeptide (Lys-Gly) (interchain with G-Cter in SUMO2); alternate). The residue at position 265 (serine 265) is a Phosphoserine. An RRM 3 domain is found at 289 to 366 (HCVHMRGLPY…IELFLNSTTG (78 aa)). Residues 355–360 (RYIELF) are interaction with RNA.

As to quaternary structure, identified in the spliceosome C complex. Interacts with AGO1, AGO2, TBP and TXNL4/DIM1. Sumoylated.

It localises to the nucleus. The protein localises to the nucleoplasm. Functionally, component of the heterogeneous nuclear ribonucleoprotein (hnRNP) complexes which provide the substrate for the processing events that pre-mRNAs undergo before becoming functional, translatable mRNAs in the cytoplasm. Plays a role in the regulation of alternative splicing events. Binds G-rich sequences in pre-mRNAs and keeps target RNA in an unfolded state. This is Heterogeneous nuclear ribonucleoprotein F (Hnrnpf) from Mus musculus (Mouse).